The following is a 271-amino-acid chain: Tryptophan synthase alpha chain (271 aa).

Catalysis depends on proton acceptor residues glutamate 51 and aspartate 62.

Belongs to the TrpA family. As to quaternary structure, tetramer of two alpha and two beta chains.

The catalysed reaction is (1S,2R)-1-C-(indol-3-yl)glycerol 3-phosphate + L-serine = D-glyceraldehyde 3-phosphate + L-tryptophan + H2O. The protein operates within amino-acid biosynthesis; L-tryptophan biosynthesis; L-tryptophan from chorismate: step 5/5. Its function is as follows. The alpha subunit is responsible for the aldol cleavage of indoleglycerol phosphate to indole and glyceraldehyde 3-phosphate. The polypeptide is Tryptophan synthase alpha chain (Prochlorococcus marinus (strain NATL2A)).